We begin with the raw amino-acid sequence, 653 residues long: MGHGRRISESIKKQLPVTGPEAPTVKNLMDWYLNNTNTHGCRRIAVSRGYLRRWIWICFTVSSVGMIFWQWTLLLMSYYTVSVSVTVQFQTLPFPAVTICNINPYRKNATSALLEELDKQTKLILKELYTSCTGCSNRKLRSVLLNEAPEEDSGVAKLLQDMPLMKFEVIKEDHVIVSELSSNRQYRINNTFITRMYNNMDLATVGEQVGFKICDANKSNCIIYTFNSGVTAILEWYRLNYLNIMAQIPNEKKLEMGYSADDLIVTCMYDGQSCDSRNFTLFQHPLHGNCYTFNSGDDGNILQTLTGGSEYGLKLTLYLENDDYNPYLFTSMGAKIIVHDQTEYPLVDDVGLEIQTATETLIGLQVTTSAKLSKPYSDCTMDGSDVLEQNLYNTSYSLQICLHSCFQTEMISNCGCAYYEQPLPSGAEYCYYEKYPGWIYCYYQLQDKFVNERLACQDICKETCNSKDWDLTKSLARWPSVASKDWVLNLLNWERGLNNTLNKNDLASIAIFYQDLNLRSLSESPANSIATLLSNMGGQLGLWMSCSIVCFLEMWEVFLVDILTIIARYWLHRGRQWWRKRKERQMQQPSPPDHDTGHHNPVCIDDEDPPTFHTAMQLPCVQTGPVPSTPPPQYNALRIQSVFDEQVSDTEVN.

The Cytoplasmic portion of the chain corresponds to 1 to 54 (MGHGRRISESIKKQLPVTGPEAPTVKNLMDWYLNNTNTHGCRRIAVSRGYLRRW). A helical transmembrane segment spans residues 55–75 (IWICFTVSSVGMIFWQWTLLL). The Extracellular segment spans residues 76–546 (MSYYTVSVSV…GGQLGLWMSC (471 aa)). 8 disulfides stabilise this stretch: cysteine 100-cysteine 290, cysteine 214-cysteine 221, cysteine 267-cysteine 274, cysteine 379-cysteine 464, cysteine 401-cysteine 460, cysteine 405-cysteine 456, cysteine 414-cysteine 441, and cysteine 416-cysteine 430. The chain crosses the membrane as a helical span at residues 547–567 (SIVCFLEMWEVFLVDILTIIA). The Cytoplasmic portion of the chain corresponds to 568–653 (RYWLHRGRQW…DEQVSDTEVN (86 aa)). The interval 582 to 608 (KERQMQQPSPPDHDTGHHNPVCIDDED) is disordered.

The protein belongs to the amiloride-sensitive sodium channel (TC 1.A.6) family. SCNN1G subfamily. In terms of assembly, component of the heterotrimeric epithelial sodium channel (ENaC) composed of an alpha/SCNN1A, a beta/SCNN1B and a gamma/SCNN1G subunit. Strongly expressed in gill, liver, kidney and rectum and more weakly in heart, muscle and intestine.

It localises to the apical cell membrane. It carries out the reaction Na(+)(in) = Na(+)(out). Originally identified and characterized by its inhibition by the diuretic drug amiloride. Functionally, this is one of the three pore-forming subunits of the heterotrimeric epithelial sodium channel (ENaC), a critical regulator of sodium balance and fluid homeostasis. ENaC operates in epithelial tissues, where it mediates the electrodiffusion of sodium ions from extracellular fluid through the apical membrane of cells, with water following osmotically. This chain is Epithelial sodium channel subunit gamma, found in Neoceratodus forsteri (Australian lungfish).